A 530-amino-acid polypeptide reads, in one-letter code: [Pyruvate dehydrogenase [acetyl-transferring]]-phosphatase 2, mitochondrial (530 aa).

The transit peptide at 1-67 (MSSTASYRIF…FALRKAYRHT (67 aa)) directs the protein to the mitochondrion. One can recognise a PPM-type phosphatase domain in the interval 107–518 (VLRFESNQLA…DDITVMVVFF (412 aa)). Residues Asp142, Gly143, Asp413, and Asp509 each coordinate Mn(2+).

Belongs to the PP2C family. Requires Mg(2+) as cofactor. In terms of tissue distribution, highly expressed in liver.

The protein localises to the mitochondrion. The enzyme catalyses O-phospho-L-seryl-[pyruvate dehydrogenase E1 alpha subunit] + H2O = L-seryl-[pyruvate dehydrogenase E1 alpha subunit] + phosphate. With respect to regulation, mg(2+)-dependent protein phosphatase. Phosphatase activity is increased in the presence of spermine, a naturally produced polyamine. In terms of biological role, mitochondrial enzyme that catalyzes the dephosphorylation and concomitant reactivation of the alpha subunit of the E1 component of the pyruvate dehydrogenase complex (PDC), thereby stimulating the conversion of pyruvate into acetyl-CoA. Acts as a crucial regulator of T cell metabolism and function, with a particular focus on T-helper Th17. This is [Pyruvate dehydrogenase [acetyl-transferring]]-phosphatase 2, mitochondrial (Pdp2) from Rattus norvegicus (Rat).